Reading from the N-terminus, the 98-residue chain is NADH-ubiquinone oxidoreductase chain 4L (98 aa).

A run of 3 helical transmembrane segments spans residues 1 to 21 (MSLV…GLLM), 29 to 49 (ALLC…LTIL), and 61 to 81 (IILL…LIMI).

Belongs to the complex I subunit 4L family. As to quaternary structure, core subunit of respiratory chain NADH dehydrogenase (Complex I) which is composed of 45 different subunits.

Its subcellular location is the mitochondrion inner membrane. The enzyme catalyses a ubiquinone + NADH + 5 H(+)(in) = a ubiquinol + NAD(+) + 4 H(+)(out). Its function is as follows. Core subunit of the mitochondrial membrane respiratory chain NADH dehydrogenase (Complex I) which catalyzes electron transfer from NADH through the respiratory chain, using ubiquinone as an electron acceptor. Part of the enzyme membrane arm which is embedded in the lipid bilayer and involved in proton translocation. The chain is NADH-ubiquinone oxidoreductase chain 4L (MT-ND4L) from Monodon monoceros (Narwhal).